The chain runs to 513 residues: Xylose import ATP-binding protein XylG (513 aa).

2 consecutive ABC transporter domains span residues 5-242 (LEMK…VGRE) and 259-505 (LRIE…LRSE). 37–44 (GENGSGKS) provides a ligand contact to ATP.

The protein belongs to the ABC transporter superfamily. Xylose importer (TC 3.A.1.2.4) family. As to quaternary structure, the complex is composed of two ATP-binding proteins (XylG), two transmembrane proteins (XylH) and a solute-binding protein (XylF).

The protein localises to the cell inner membrane. It carries out the reaction D-xylose(out) + ATP + H2O = D-xylose(in) + ADP + phosphate + H(+). Functionally, part of the ABC transporter complex XylFGH involved in xylose import. Responsible for energy coupling to the transport system. The XylFGH system can also transport ribose in absence of xylose. The sequence is that of Xylose import ATP-binding protein XylG from Escherichia coli (strain K12).